Here is a 378-residue protein sequence, read N- to C-terminus: Vacuolar membrane protein CAGL0J10076g (378 aa).

The segment at 18-70 (RGLPRLVTTSTTPTPTTEPTTEPTTTKDETSQTSATDASTATTSTAATSTAAT) is disordered. Composition is skewed to low complexity over residues 25-41 (TTSTTPTPTTEPTTEPT) and 48-70 (SQTSATDASTATTSTAATSTAAT). A helical transmembrane segment spans residues 118–138 (FIAVGSIAGAILMLIFLWWSI). The tract at residues 299-368 (NDYDTPLIPD…ARDHRKTPSM (70 aa)) is disordered. Over residues 321–337 (RSHRKTPSNDKYHRRNR) the composition is skewed to basic residues. Low complexity predominate over residues 343 to 356 (SPSRSPTRTPIRTR).

This sequence belongs to the PRM5 family.

The protein localises to the vacuole membrane. This Candida glabrata (strain ATCC 2001 / BCRC 20586 / JCM 3761 / NBRC 0622 / NRRL Y-65 / CBS 138) (Yeast) protein is Vacuolar membrane protein CAGL0J10076g.